The primary structure comprises 89 residues: Large ribosomal subunit protein eL34 (89 aa).

The protein belongs to the eukaryotic ribosomal protein eL34 family.

This is Large ribosomal subunit protein eL34 (rpl34e) from Methanocaldococcus jannaschii (strain ATCC 43067 / DSM 2661 / JAL-1 / JCM 10045 / NBRC 100440) (Methanococcus jannaschii).